A 642-amino-acid chain; its full sequence is Threonine--tRNA ligase (642 aa).

Residues 1-61 form the TGS domain; sequence MPVITLPDGS…DTDAQLAIIT (61 aa). The catalytic stretch occupies residues 243–534; that stretch reads DHRKIGKQLD…LTEEFAGFFP (292 aa). Zn(2+) is bound by residues C334, H385, and H511.

It belongs to the class-II aminoacyl-tRNA synthetase family. Homodimer. Requires Zn(2+) as cofactor.

Its subcellular location is the cytoplasm. It carries out the reaction tRNA(Thr) + L-threonine + ATP = L-threonyl-tRNA(Thr) + AMP + diphosphate + H(+). Catalyzes the attachment of threonine to tRNA(Thr) in a two-step reaction: L-threonine is first activated by ATP to form Thr-AMP and then transferred to the acceptor end of tRNA(Thr). Also edits incorrectly charged L-seryl-tRNA(Thr). This is Threonine--tRNA ligase from Pectobacterium carotovorum subsp. carotovorum (strain PC1).